Here is a 394-residue protein sequence, read N- to C-terminus: Putative agmatinase 1 (394 aa).

The signal sequence occupies residues 1 to 20; sequence MALQSLFLILLAGAAQLAQA. His186, Asp209, His211, Asp213, Asp307, and Asp309 together coordinate Mn(2+).

It belongs to the arginase family. Mn(2+) is required as a cofactor.

It catalyses the reaction agmatine + H2O = urea + putrescine. This Schizosaccharomyces pombe (strain 972 / ATCC 24843) (Fission yeast) protein is Putative agmatinase 1.